The following is a 309-amino-acid chain: Porphobilinogen deaminase (309 aa).

Position 240 is an S-(dipyrrolylmethanemethyl)cysteine (Cys240).

The protein belongs to the HMBS family. In terms of assembly, monomer. The cofactor is dipyrromethane.

It catalyses the reaction 4 porphobilinogen + H2O = hydroxymethylbilane + 4 NH4(+). Its pathway is porphyrin-containing compound metabolism; protoporphyrin-IX biosynthesis; coproporphyrinogen-III from 5-aminolevulinate: step 2/4. In terms of biological role, tetrapolymerization of the monopyrrole PBG into the hydroxymethylbilane pre-uroporphyrinogen in several discrete steps. This Lawsonia intracellularis (strain PHE/MN1-00) protein is Porphobilinogen deaminase.